Here is a 312-residue protein sequence, read N- to C-terminus: Acetylglutamate kinase (312 aa).

Residues 69-70 (GG), R91, and N191 contribute to the substrate site.

This sequence belongs to the acetylglutamate kinase family. ArgB subfamily.

The protein resides in the cytoplasm. It catalyses the reaction N-acetyl-L-glutamate + ATP = N-acetyl-L-glutamyl 5-phosphate + ADP. Its pathway is amino-acid biosynthesis; L-arginine biosynthesis; N(2)-acetyl-L-ornithine from L-glutamate: step 2/4. Functionally, catalyzes the ATP-dependent phosphorylation of N-acetyl-L-glutamate. The chain is Acetylglutamate kinase from Streptomyces griseus subsp. griseus (strain JCM 4626 / CBS 651.72 / NBRC 13350 / KCC S-0626 / ISP 5235).